A 207-amino-acid chain; its full sequence is Small ribosomal subunit protein uS4 (207 aa).

The disordered stretch occupies residues 33 to 54 (KLDSKPGQHGRTSGARTSDYGN). Positions 42-53 (GRTSGARTSDYG) are enriched in polar residues. Residues 97-160 (SRLDNVVYRM…KKQVRIAEAL (64 aa)) enclose the S4 RNA-binding domain.

The protein belongs to the universal ribosomal protein uS4 family. As to quaternary structure, part of the 30S ribosomal subunit. Contacts protein S5. The interaction surface between S4 and S5 is involved in control of translational fidelity.

Its function is as follows. One of the primary rRNA binding proteins, it binds directly to 16S rRNA where it nucleates assembly of the body of the 30S subunit. With S5 and S12 plays an important role in translational accuracy. This chain is Small ribosomal subunit protein uS4, found in Cupriavidus pinatubonensis (strain JMP 134 / LMG 1197) (Cupriavidus necator (strain JMP 134)).